A 320-amino-acid polypeptide reads, in one-letter code: Acetyl-coenzyme A carboxylase carboxyl transferase subunit alpha (320 aa).

Residues 33-294 form the CoA carboxyltransferase C-terminal domain; it reads AFDGEIESLR…GDAVEEELKA (262 aa).

The protein belongs to the AccA family. Acetyl-CoA carboxylase is a heterohexamer composed of biotin carboxyl carrier protein (AccB), biotin carboxylase (AccC) and two subunits each of ACCase subunit alpha (AccA) and ACCase subunit beta (AccD).

It is found in the cytoplasm. The catalysed reaction is N(6)-carboxybiotinyl-L-lysyl-[protein] + acetyl-CoA = N(6)-biotinyl-L-lysyl-[protein] + malonyl-CoA. Its pathway is lipid metabolism; malonyl-CoA biosynthesis; malonyl-CoA from acetyl-CoA: step 1/1. Its function is as follows. Component of the acetyl coenzyme A carboxylase (ACC) complex. First, biotin carboxylase catalyzes the carboxylation of biotin on its carrier protein (BCCP) and then the CO(2) group is transferred by the carboxyltransferase to acetyl-CoA to form malonyl-CoA. The polypeptide is Acetyl-coenzyme A carboxylase carboxyl transferase subunit alpha (Phenylobacterium zucineum (strain HLK1)).